Reading from the N-terminus, the 276-residue chain is 2-dehydro-3-deoxyphosphooctonate aldolase (276 aa).

The protein belongs to the KdsA family.

The protein resides in the cytoplasm. The catalysed reaction is D-arabinose 5-phosphate + phosphoenolpyruvate + H2O = 3-deoxy-alpha-D-manno-2-octulosonate-8-phosphate + phosphate. It participates in carbohydrate biosynthesis; 3-deoxy-D-manno-octulosonate biosynthesis; 3-deoxy-D-manno-octulosonate from D-ribulose 5-phosphate: step 2/3. Its pathway is bacterial outer membrane biogenesis; lipopolysaccharide biosynthesis. This chain is 2-dehydro-3-deoxyphosphooctonate aldolase, found in Helicobacter pylori (strain HPAG1).